Reading from the N-terminus, the 624-residue chain is Chaperone protein HtpG (624 aa).

The segment at 1 to 336 (MKGQETRGFQ…SNDLPLNVSR (336 aa)) is a; substrate-binding. A b region spans residues 337–552 (EILQDSTVTR…ADEMSTQMAK (216 aa)). The c stretch occupies residues 553-624 (LFAAAGQSVP…IRRMNQLLVS (72 aa)).

This sequence belongs to the heat shock protein 90 family. As to quaternary structure, homodimer. Post-translationally, UMPylated on a histidine residue by YdiU under ATP-limited conditions.

The protein localises to the cytoplasm. Its activity is regulated as follows. UMPylation of the chaperone by YdiU negatively regulates its activity, facilitating Salmonella survival under ATP-limited conditions. Functionally, molecular chaperone. Has ATPase activity. This chain is Chaperone protein HtpG, found in Salmonella typhimurium (strain LT2 / SGSC1412 / ATCC 700720).